The primary structure comprises 425 residues: Bifunctional phosphoribosylaminoimidazole carboxylase/phosphoribosylaminoimidazole succinocarboxamide synthetase (425 aa).

At Ala-2 the chain carries N-acetylalanine. Positions 2–260 (ATAVVVNIGK…WVADRVELLL (259 aa)) are SAICAR synthetase domain. Residue Tyr-22 is modified to Phosphotyrosine. Lys-36 bears the N6-acetyllysine mark. The residue at position 107 (Ser-107) is a Phosphoserine. Thr-238 bears the Phosphothreonine mark. Position 247 is an N6-acetyllysine (Lys-247). Positions 261-266 (KSDSQC) are linker. Residues 267 to 425 (RVVVLMGSTS…ADKKVRQCNL (159 aa)) are AIR carboxylase domain. Residue Ser-274 is modified to Phosphoserine. Ser-332 serves as a coordination point for CO2.

In the N-terminal section; belongs to the SAICAR synthetase family. It in the C-terminal section; belongs to the AIR carboxylase family. Class II subfamily. As to quaternary structure, homooctamer.

It catalyses the reaction 5-amino-1-(5-phospho-D-ribosyl)imidazole-4-carboxylate + L-aspartate + ATP = (2S)-2-[5-amino-1-(5-phospho-beta-D-ribosyl)imidazole-4-carboxamido]succinate + ADP + phosphate + 2 H(+). It carries out the reaction 5-amino-1-(5-phospho-D-ribosyl)imidazole-4-carboxylate + H(+) = 5-amino-1-(5-phospho-beta-D-ribosyl)imidazole + CO2. The protein operates within purine metabolism; IMP biosynthesis via de novo pathway; 5-amino-1-(5-phospho-D-ribosyl)imidazole-4-carboxamide from 5-amino-1-(5-phospho-D-ribosyl)imidazole-4-carboxylate: step 1/2. Its pathway is purine metabolism; IMP biosynthesis via de novo pathway; 5-amino-1-(5-phospho-D-ribosyl)imidazole-4-carboxylate from 5-amino-1-(5-phospho-D-ribosyl)imidazole (carboxylase route): step 1/1. Functionally, bifunctional phosphoribosylaminoimidazole carboxylase and phosphoribosylaminoimidazole succinocarboxamide synthetase catalyzing two reactions of the de novo purine biosynthetic pathway. The sequence is that of Bifunctional phosphoribosylaminoimidazole carboxylase/phosphoribosylaminoimidazole succinocarboxamide synthetase from Mus musculus (Mouse).